A 212-amino-acid chain; its full sequence is Peptide methionine sulfoxide reductase MsrA (212 aa).

C52 is a catalytic residue.

The protein belongs to the MsrA Met sulfoxide reductase family.

It catalyses the reaction L-methionyl-[protein] + [thioredoxin]-disulfide + H2O = L-methionyl-(S)-S-oxide-[protein] + [thioredoxin]-dithiol. The catalysed reaction is [thioredoxin]-disulfide + L-methionine + H2O = L-methionine (S)-S-oxide + [thioredoxin]-dithiol. Functionally, has an important function as a repair enzyme for proteins that have been inactivated by oxidation. Catalyzes the reversible oxidation-reduction of methionine sulfoxide in proteins to methionine. The chain is Peptide methionine sulfoxide reductase MsrA from Escherichia coli (strain SMS-3-5 / SECEC).